The chain runs to 77 residues: U14-theraphotoxin-Cg1a 3 (77 aa).

A signal peptide spans 1–21 (MKTSVLLVILGIAAITVQCTA). A propeptide spanning residues 22–49 (SESVEQDSLRTFVDTVLGWNAEMASEAR) is cleaved from the precursor. Cystine bridges form between C50-C64, C57-C69, and C63-C75. K77 carries the lysine amide modification.

It belongs to the neurotoxin 10 (Hwtx-1) family. 65 (Jztx-21) subfamily. As to expression, expressed by the venom gland.

It is found in the secreted. Probable ion channel inhibitor. The polypeptide is U14-theraphotoxin-Cg1a 3 (Chilobrachys guangxiensis (Chinese earth tiger tarantula)).